The following is a 462-amino-acid chain: L-seryl-tRNA(Sec) selenium transferase (462 aa).

The residue at position 295 (K295) is an N6-(pyridoxal phosphate)lysine.

This sequence belongs to the SelA family. Homodecamer; pentamer of dimers. Binds only one seryl-tRNA(Sec) per dimer. Pyridoxal 5'-phosphate serves as cofactor.

Its subcellular location is the cytoplasm. The catalysed reaction is L-seryl-tRNA(Sec) + selenophosphate + H(+) = L-selenocysteinyl-tRNA(Sec) + phosphate. It functions in the pathway aminoacyl-tRNA biosynthesis; selenocysteinyl-tRNA(Sec) biosynthesis; selenocysteinyl-tRNA(Sec) from L-seryl-tRNA(Sec) (bacterial route): step 1/1. In terms of biological role, converts seryl-tRNA(Sec) to selenocysteinyl-tRNA(Sec) required for selenoprotein biosynthesis. The protein is L-seryl-tRNA(Sec) selenium transferase of Klebsiella pneumoniae (strain 342).